A 345-amino-acid chain; its full sequence is Biotin synthase (345 aa).

In terms of domain architecture, Radical SAM core spans 38–256; it reads RQVQVSTLLS…IAVARIMMPS (219 aa). [4Fe-4S] cluster is bound by residues Cys-53, Cys-57, and Cys-60. 4 residues coordinate [2Fe-2S] cluster: Cys-97, Cys-128, Cys-188, and Arg-260.

It belongs to the radical SAM superfamily. Biotin synthase family. Homodimer. The cofactor is [4Fe-4S] cluster. [2Fe-2S] cluster is required as a cofactor.

It catalyses the reaction (4R,5S)-dethiobiotin + (sulfur carrier)-SH + 2 reduced [2Fe-2S]-[ferredoxin] + 2 S-adenosyl-L-methionine = (sulfur carrier)-H + biotin + 2 5'-deoxyadenosine + 2 L-methionine + 2 oxidized [2Fe-2S]-[ferredoxin]. It functions in the pathway cofactor biosynthesis; biotin biosynthesis; biotin from 7,8-diaminononanoate: step 2/2. In terms of biological role, catalyzes the conversion of dethiobiotin (DTB) to biotin by the insertion of a sulfur atom into dethiobiotin via a radical-based mechanism. This chain is Biotin synthase, found in Yersinia pseudotuberculosis serotype O:1b (strain IP 31758).